We begin with the raw amino-acid sequence, 140 residues long: Transcription antitermination protein NusB (140 aa).

This sequence belongs to the NusB family.

Its function is as follows. Involved in transcription antitermination. Required for transcription of ribosomal RNA (rRNA) genes. Binds specifically to the boxA antiterminator sequence of the ribosomal RNA (rrn) operons. The polypeptide is Transcription antitermination protein NusB (Thermoanaerobacter pseudethanolicus (strain ATCC 33223 / 39E) (Clostridium thermohydrosulfuricum)).